A 336-amino-acid polypeptide reads, in one-letter code: tRNA N6-adenosine threonylcarbamoyltransferase (336 aa).

His-114 and His-118 together coordinate Fe cation. Residues 136–140 (LVSGG), Asp-169, Gly-182, Asp-186, and Asn-275 contribute to the substrate site. Asp-302 lines the Fe cation pocket.

Belongs to the KAE1 / TsaD family. It depends on Fe(2+) as a cofactor.

The protein resides in the cytoplasm. It catalyses the reaction L-threonylcarbamoyladenylate + adenosine(37) in tRNA = N(6)-L-threonylcarbamoyladenosine(37) in tRNA + AMP + H(+). Its function is as follows. Required for the formation of a threonylcarbamoyl group on adenosine at position 37 (t(6)A37) in tRNAs that read codons beginning with adenine. Is involved in the transfer of the threonylcarbamoyl moiety of threonylcarbamoyl-AMP (TC-AMP) to the N6 group of A37, together with TsaE and TsaB. TsaD likely plays a direct catalytic role in this reaction. The sequence is that of tRNA N6-adenosine threonylcarbamoyltransferase from Streptococcus agalactiae serotype III (strain NEM316).